A 187-amino-acid chain; its full sequence is Elongation factor P (187 aa).

The protein belongs to the elongation factor P family.

The protein localises to the cytoplasm. The protein operates within protein biosynthesis; polypeptide chain elongation. Functionally, involved in peptide bond synthesis. Stimulates efficient translation and peptide-bond synthesis on native or reconstituted 70S ribosomes in vitro. Probably functions indirectly by altering the affinity of the ribosome for aminoacyl-tRNA, thus increasing their reactivity as acceptors for peptidyl transferase. This chain is Elongation factor P, found in Corynebacterium kroppenstedtii (strain DSM 44385 / JCM 11950 / CIP 105744 / CCUG 35717).